The chain runs to 294 residues: GTPase Era (294 aa).

An Era-type G domain is found at 4 to 170; the sequence is KSGFVSVIGR…VEEIFTFLPE (167 aa). Residues 12-19 form a G1 region; that stretch reads GRPNVGKS. Residue 12 to 19 coordinates GTP; it reads GRPNVGKS. The interval 38–42 is G2; sequence QTTRN. A G3 region spans residues 59–62; it reads DTPG. GTP contacts are provided by residues 59-63 and 121-124; these read DTPGI and NKID. Residues 121 to 124 form a G4 region; the sequence is NKID. The G5 stretch occupies residues 149 to 151; sequence ISA. A KH type-2 domain is found at 201–278; sequence TREEVPYGVA…YLDLWVKIEK (78 aa).

The protein belongs to the TRAFAC class TrmE-Era-EngA-EngB-Septin-like GTPase superfamily. Era GTPase family. As to quaternary structure, monomer.

It localises to the cytoplasm. The protein resides in the cell inner membrane. An essential GTPase that binds both GDP and GTP, with rapid nucleotide exchange. Plays a role in 16S rRNA processing and 30S ribosomal subunit biogenesis and possibly also in cell cycle regulation and energy metabolism. The sequence is that of GTPase Era from Halothermothrix orenii (strain H 168 / OCM 544 / DSM 9562).